Here is a 206-residue protein sequence, read N- to C-terminus: Methylthioribulose-1-phosphate dehydratase (206 aa).

Positions 96 and 98 each coordinate Zn(2+).

The protein belongs to the aldolase class II family. MtnB subfamily. The cofactor is Zn(2+).

It catalyses the reaction 5-(methylsulfanyl)-D-ribulose 1-phosphate = 5-methylsulfanyl-2,3-dioxopentyl phosphate + H2O. Its pathway is amino-acid biosynthesis; L-methionine biosynthesis via salvage pathway; L-methionine from S-methyl-5-thio-alpha-D-ribose 1-phosphate: step 2/6. In terms of biological role, catalyzes the dehydration of methylthioribulose-1-phosphate (MTRu-1-P) into 2,3-diketo-5-methylthiopentyl-1-phosphate (DK-MTP-1-P). The chain is Methylthioribulose-1-phosphate dehydratase from Exiguobacterium sibiricum (strain DSM 17290 / CCUG 55495 / CIP 109462 / JCM 13490 / 255-15).